The following is a 297-amino-acid chain: Aspartate carbamoyltransferase catalytic subunit (297 aa).

Residues R49 and T50 each coordinate carbamoyl phosphate. K77 contacts L-aspartate. R99, H129, and Q132 together coordinate carbamoyl phosphate. Residues R162 and R215 each coordinate L-aspartate. 2 residues coordinate carbamoyl phosphate: G256 and P257.

It belongs to the aspartate/ornithine carbamoyltransferase superfamily. ATCase family. In terms of assembly, heterododecamer (2C3:3R2) of six catalytic PyrB chains organized as two trimers (C3), and six regulatory PyrI chains organized as three dimers (R2).

The enzyme catalyses carbamoyl phosphate + L-aspartate = N-carbamoyl-L-aspartate + phosphate + H(+). Its pathway is pyrimidine metabolism; UMP biosynthesis via de novo pathway; (S)-dihydroorotate from bicarbonate: step 2/3. Its function is as follows. Catalyzes the condensation of carbamoyl phosphate and aspartate to form carbamoyl aspartate and inorganic phosphate, the committed step in the de novo pyrimidine nucleotide biosynthesis pathway. In Legionella pneumophila (strain Lens), this protein is Aspartate carbamoyltransferase catalytic subunit.